A 513-amino-acid polypeptide reads, in one-letter code: Glycogen synthase (513 aa).

ADP-alpha-D-glucose is bound at residue lysine 47.

Belongs to the glycosyltransferase 1 family. Bacterial/plant glycogen synthase subfamily.

It carries out the reaction [(1-&gt;4)-alpha-D-glucosyl](n) + ADP-alpha-D-glucose = [(1-&gt;4)-alpha-D-glucosyl](n+1) + ADP + H(+). It participates in glycan biosynthesis; glycogen biosynthesis. Its function is as follows. Synthesizes alpha-1,4-glucan chains using ADP-glucose. This Pseudomonas paraeruginosa (strain DSM 24068 / PA7) (Pseudomonas aeruginosa (strain PA7)) protein is Glycogen synthase.